A 614-amino-acid polypeptide reads, in one-letter code: Vitamin B12 transporter BtuB (614 aa).

The first 20 residues, 1 to 20 (MIKKATLLTAFSVTAFSAWA), serve as a signal peptide directing secretion. Positions 26 to 33 (DTLVVTAN) match the TonB box motif. Positions 38–152 (PRSAVLAPVT…IGGVVNIITT (115 aa)) constitute a TBDR plug domain. Residues Ser-85, Asn-92, and 110–111 (VS) each bind cyanocob(III)alamin. The TBDR beta-barrel domain occupies 155 to 614 (NPGTELTAGW…EYTLSGSYTF (460 aa)). A run of 3 beta stranded transmembrane segments spans residues 158 to 165 (TELTAGWG), 169 to 178 (YQNYDISTQQ), and 184 to 195 (TRATLIGDYEYT). The Ca(2+) site is built by Asp-199, Gln-211, Asp-213, and Asp-215. The next 2 membrane-spanning stretches (beta stranded) occupy residues 217–227 (FLSKTLYGALE) and 232–248 (DRWS…NRTD). Ca(2+)-binding residues include Tyr-249 and Asp-250. Position 251 (Ala-251) interacts with cyanocob(III)alamin. Residue Asp-261 coordinates Ca(2+). 14 consecutive transmembrane segments (beta stranded) span residues 263 to 277 (RKLY…LRFN), 279 to 296 (ERIQ…KDYN), 309 to 325 (TLDE…NSVV), 328 to 337 (HGNVGAGVDW), 353 to 369 (YDQR…QQLG), 371 to 381 (FTLEAAARSDD), 385 to 400 (FGRH…WEFI), 403 to 417 (YRFI…KAPN), 434 to 443 (KSKQWEGAFE), 449 to 458 (VSWRISGYRN), 473 to 490 (YYNE…TANF), 494 to 509 (PLTH…ARNA), 517 to 529 (RRSK…QLDW), and 535 to 550 (DWGV…YDSD). Thr-309 is a binding site for cyanocob(III)alamin. Cyanocob(III)alamin is bound at residue Arg-517. A cyanocob(III)alamin-binding site is contributed by Tyr-551. The next 3 membrane-spanning stretches (beta stranded) occupy residues 558 to 572 (TVKM…LTVA), 585 to 596 (IANLFDKDYETV), and 602 to 614 (AGRE…SYTF). The TonB C-terminal box signature appears at 597 to 614 (YGYQTAGREYTLSGSYTF).

This sequence belongs to the TonB-dependent receptor family. BtuB (TC 1.B.14.3.1) subfamily.

The protein resides in the cell outer membrane. Involved in the active translocation of vitamin B12 (cyanocobalamin) across the outer membrane to the periplasmic space. It derives its energy for transport by interacting with the trans-periplasmic membrane protein TonB. The protein is Vitamin B12 transporter BtuB of Salmonella choleraesuis (strain SC-B67).